A 584-amino-acid polypeptide reads, in one-letter code: uncharacterized protein (584 aa).

Polar residues predominate over residues Asn-353–Ala-375. Disordered regions lie at residues Asn-353–Glu-379, Leu-400–His-426, and Ser-463–Gly-565. Polar residues predominate over residues Lys-502–Leu-511. Positions Asp-516–Ala-535 are enriched in basic and acidic residues.

This is an uncharacterized protein from Mus musculus (Mouse).